Consider the following 1026-residue polypeptide: Phosphoenolpyruvate carboxylase (1026 aa).

Residues His-199 and Lys-672 contribute to the active site.

Belongs to the PEPCase type 1 family. Mg(2+) serves as cofactor.

It carries out the reaction oxaloacetate + phosphate = phosphoenolpyruvate + hydrogencarbonate. Forms oxaloacetate, a four-carbon dicarboxylic acid source for the tricarboxylic acid cycle. This chain is Phosphoenolpyruvate carboxylase (ppc), found in Nostoc sp. (strain PCC 7120 / SAG 25.82 / UTEX 2576).